A 307-amino-acid polypeptide reads, in one-letter code: Inner spore coat protein H-like protein (307 aa).

It belongs to the CotH family.

It is found in the spore coat. Involved in the assembly of several proteins in the inner and outer layer of the spore coat. This Bacillus subtilis (strain 168) protein is Inner spore coat protein H-like protein (yisJ).